The chain runs to 342 residues: Ribosomal RNA small subunit methyltransferase C (342 aa).

It belongs to the methyltransferase superfamily. RsmC family. In terms of assembly, monomer.

The protein resides in the cytoplasm. The enzyme catalyses guanosine(1207) in 16S rRNA + S-adenosyl-L-methionine = N(2)-methylguanosine(1207) in 16S rRNA + S-adenosyl-L-homocysteine + H(+). In terms of biological role, specifically methylates the guanine in position 1207 of 16S rRNA in the 30S particle. This chain is Ribosomal RNA small subunit methyltransferase C, found in Salmonella agona (strain SL483).